The sequence spans 86 residues: MVVIRMARGGAKKRPFYHIVVADSRSRRDGRFIERLGFYNPIGAVAELRIDKERAAYWLSQGAQPSDTVAGFLKKEGVSKTGVASV.

It belongs to the bacterial ribosomal protein bS16 family.

The chain is Small ribosomal subunit protein bS16 from Acidithiobacillus ferrooxidans (strain ATCC 23270 / DSM 14882 / CIP 104768 / NCIMB 8455) (Ferrobacillus ferrooxidans (strain ATCC 23270)).